The sequence spans 751 residues: Polyribonucleotide nucleotidyltransferase (751 aa).

Mg(2+)-binding residues include aspartate 528 and aspartate 534. The 60-residue stretch at 594–653 (PRVISVTVPVSKIGEVIGPKGKMINQIQEDTGTDISIEDDGTVYIGATDGPSAEAARSAI) folds into the KH domain. An S1 motif domain is found at 665-737 (GERYLGTVVK…DRGKLSLAPV (73 aa)).

Belongs to the polyribonucleotide nucleotidyltransferase family. The cofactor is Mg(2+).

Its subcellular location is the cytoplasm. It carries out the reaction RNA(n+1) + phosphate = RNA(n) + a ribonucleoside 5'-diphosphate. Involved in mRNA degradation. Catalyzes the phosphorolysis of single-stranded polyribonucleotides processively in the 3'- to 5'-direction. The polypeptide is Polyribonucleotide nucleotidyltransferase (Kocuria rhizophila (strain ATCC 9341 / DSM 348 / NBRC 103217 / DC2201)).